Here is a 304-residue protein sequence, read N- to C-terminus: Non-specific ribonucleoside hydrolase RihC (304 aa).

Histidine 233 is an active-site residue.

It belongs to the IUNH family. RihC subfamily.

In terms of biological role, hydrolyzes both purine and pyrimidine ribonucleosides with a broad-substrate specificity. In Escherichia coli O139:H28 (strain E24377A / ETEC), this protein is Non-specific ribonucleoside hydrolase RihC.